The chain runs to 180 residues: Crossover junction endodeoxyribonuclease RuvC (180 aa).

Active-site residues include Asp-7, Glu-66, and Asp-138. Positions 7, 66, and 138 each coordinate Mg(2+).

This sequence belongs to the RuvC family. As to quaternary structure, homodimer which binds Holliday junction (HJ) DNA. The HJ becomes 2-fold symmetrical on binding to RuvC with unstacked arms; it has a different conformation from HJ DNA in complex with RuvA. In the full resolvosome a probable DNA-RuvA(4)-RuvB(12)-RuvC(2) complex forms which resolves the HJ. Mg(2+) serves as cofactor.

It is found in the cytoplasm. It carries out the reaction Endonucleolytic cleavage at a junction such as a reciprocal single-stranded crossover between two homologous DNA duplexes (Holliday junction).. Functionally, the RuvA-RuvB-RuvC complex processes Holliday junction (HJ) DNA during genetic recombination and DNA repair. Endonuclease that resolves HJ intermediates. Cleaves cruciform DNA by making single-stranded nicks across the HJ at symmetrical positions within the homologous arms, yielding a 5'-phosphate and a 3'-hydroxyl group; requires a central core of homology in the junction. The consensus cleavage sequence is 5'-(A/T)TT(C/G)-3'. Cleavage occurs on the 3'-side of the TT dinucleotide at the point of strand exchange. HJ branch migration catalyzed by RuvA-RuvB allows RuvC to scan DNA until it finds its consensus sequence, where it cleaves and resolves the cruciform DNA. This chain is Crossover junction endodeoxyribonuclease RuvC, found in Burkholderia orbicola (strain AU 1054).